A 171-amino-acid chain; its full sequence is Shikimate kinase (171 aa).

ATP is bound at residue 14–19 (GAGKST). Mg(2+) is bound at residue Ser18. Asp36, Arg60, and Gly82 together coordinate substrate. Arg120 is a binding site for ATP. Residue Arg139 participates in substrate binding. An ATP-binding site is contributed by Gln156.

This sequence belongs to the shikimate kinase family. As to quaternary structure, monomer. Mg(2+) is required as a cofactor.

The protein resides in the cytoplasm. It carries out the reaction shikimate + ATP = 3-phosphoshikimate + ADP + H(+). The protein operates within metabolic intermediate biosynthesis; chorismate biosynthesis; chorismate from D-erythrose 4-phosphate and phosphoenolpyruvate: step 5/7. Its function is as follows. Catalyzes the specific phosphorylation of the 3-hydroxyl group of shikimic acid using ATP as a cosubstrate. In Shewanella sediminis (strain HAW-EB3), this protein is Shikimate kinase.